A 333-amino-acid chain; its full sequence is MDERLLSGESAYEDADLEYSLRPQTLRQYIGQDKAKHNLEVFIEAAKMREETLDHVLLYGPPGLGKTTLANIIANEMGVNVRTTSGPAIERPGDLAAVLTALQPGDVLFIDEIHRLHRSIEEVLYPAMEDFCLDIVIGKGPSARSVRLDLPPFTLVGATTRAGALSAPLRDRFGVLSRLEYYTVDQLSAIVERTAEVFEVEIDSLAALEIARRARGTPRIANRLLRRVRDFAQVRGNGTVTMEITQMALELLQVDKLGLDHIDHKLLLGIIEKFRGGPVGLETVSATIGEESHTIEDVYEPYLLQIGFLQRTPRGRIVTPLAYEHFGMEIPKV.

The large ATPase domain (RuvB-L) stretch occupies residues Met-1–Tyr-182. Residues Leu-21, Arg-22, Gly-63, Lys-66, Thr-67, Thr-68, Glu-129 to Phe-131, Arg-172, Tyr-182, and Arg-219 contribute to the ATP site. Thr-67 provides a ligand contact to Mg(2+). Residues Thr-183–Gln-253 are small ATPAse domain (RuvB-S). The segment at Lys-256 to Val-333 is head domain (RuvB-H). Residues Arg-311 and Arg-316 each coordinate DNA.

This sequence belongs to the RuvB family. In terms of assembly, homohexamer. Forms an RuvA(8)-RuvB(12)-Holliday junction (HJ) complex. HJ DNA is sandwiched between 2 RuvA tetramers; dsDNA enters through RuvA and exits via RuvB. An RuvB hexamer assembles on each DNA strand where it exits the tetramer. Each RuvB hexamer is contacted by two RuvA subunits (via domain III) on 2 adjacent RuvB subunits; this complex drives branch migration. In the full resolvosome a probable DNA-RuvA(4)-RuvB(12)-RuvC(2) complex forms which resolves the HJ.

The protein resides in the cytoplasm. It catalyses the reaction ATP + H2O = ADP + phosphate + H(+). Its function is as follows. The RuvA-RuvB-RuvC complex processes Holliday junction (HJ) DNA during genetic recombination and DNA repair, while the RuvA-RuvB complex plays an important role in the rescue of blocked DNA replication forks via replication fork reversal (RFR). RuvA specifically binds to HJ cruciform DNA, conferring on it an open structure. The RuvB hexamer acts as an ATP-dependent pump, pulling dsDNA into and through the RuvAB complex. RuvB forms 2 homohexamers on either side of HJ DNA bound by 1 or 2 RuvA tetramers; 4 subunits per hexamer contact DNA at a time. Coordinated motions by a converter formed by DNA-disengaged RuvB subunits stimulates ATP hydrolysis and nucleotide exchange. Immobilization of the converter enables RuvB to convert the ATP-contained energy into a lever motion, pulling 2 nucleotides of DNA out of the RuvA tetramer per ATP hydrolyzed, thus driving DNA branch migration. The RuvB motors rotate together with the DNA substrate, which together with the progressing nucleotide cycle form the mechanistic basis for DNA recombination by continuous HJ branch migration. Branch migration allows RuvC to scan DNA until it finds its consensus sequence, where it cleaves and resolves cruciform DNA. The polypeptide is Holliday junction branch migration complex subunit RuvB (Bacillus cereus (strain B4264)).